Reading from the N-terminus, the 154-residue chain is Large ribosomal subunit protein uL22c (154 aa).

Belongs to the universal ribosomal protein uL22 family. In terms of assembly, part of the 50S ribosomal subunit.

The protein resides in the plastid. The protein localises to the chloroplast. Its function is as follows. This protein binds specifically to 23S rRNA. In terms of biological role, the globular domain of the protein is located near the polypeptide exit tunnel on the outside of the subunit, while an extended beta-hairpin is found that lines the wall of the exit tunnel in the center of the 70S ribosome. The polypeptide is Large ribosomal subunit protein uL22c (rpl22) (Guizotia abyssinica (Niger)).